Reading from the N-terminus, the 470-residue chain is SHUGOSHIN 2 (470 aa).

Positions 72–113 form a coiled coil; it reads IQKLRINLRSVQEKNLQLAQANSQMLAELNTNRDRLKDLQHE. 2 stretches are compositionally biased toward basic and acidic residues: residues 131-143 and 150-162; these read VLPR…KDKV and GDCK…DIKH. Disordered stretches follow at residues 131–176 and 358–470; these read VLPR…IKSS and ESAG…RRKC. Over residues 163 to 172 the composition is skewed to basic residues; it reads KDTKRKRTTR. The segment covering 370–381 has biased composition (basic and acidic residues); it reads SESRHETKEITR. Basic residues predominate over residues 382–392; sequence KRSFSTRRQST. Composition is skewed to basic and acidic residues over residues 396 to 406, 423 to 438, and 449 to 462; these read SQTDEAIKEIA, TESK…EGMT, and HAAE…EVSL.

This sequence belongs to the shugoshin family.

Dispensable for both meiotic and mitotic cell cycle progression. Required with SGO1 for full protection of centromeric cohesion during anaphase I. Required to prevent precocious release of pericentromeric cohesins during meiosis. Acts redundantly to SGO1. The chain is SHUGOSHIN 2 from Arabidopsis thaliana (Mouse-ear cress).